Reading from the N-terminus, the 301-residue chain is D-alanine--D-alanine ligase (301 aa).

The region spanning 101–296 is the ATP-grasp domain; it reads KLMWRAAGLA…YPTLVRRVLE (196 aa). Position 127 to 182 (127 to 182) interacts with ATP; sequence EEELGLPLFVKPAREGSSIGVTKVKERGALKAAYEEAARHDPLVIAEKGVMGGEYT. The Mg(2+) site is built by Asp-250, Glu-263, and Asn-265.

It belongs to the D-alanine--D-alanine ligase family. Mg(2+) serves as cofactor. The cofactor is Mn(2+).

It is found in the cytoplasm. It catalyses the reaction 2 D-alanine + ATP = D-alanyl-D-alanine + ADP + phosphate + H(+). It functions in the pathway cell wall biogenesis; peptidoglycan biosynthesis. Its function is as follows. Cell wall formation. This chain is D-alanine--D-alanine ligase, found in Dechloromonas aromatica (strain RCB).